A 451-amino-acid polypeptide reads, in one-letter code: Phosphoglucosamine mutase (451 aa).

The active-site Phosphoserine intermediate is the S101. Residues S101, D241, D243, and D245 each contribute to the Mg(2+) site. S101 carries the post-translational modification Phosphoserine.

The protein belongs to the phosphohexose mutase family. Requires Mg(2+) as cofactor. Post-translationally, activated by phosphorylation.

It carries out the reaction alpha-D-glucosamine 1-phosphate = D-glucosamine 6-phosphate. Its function is as follows. Catalyzes the conversion of glucosamine-6-phosphate to glucosamine-1-phosphate. In Exiguobacterium sibiricum (strain DSM 17290 / CCUG 55495 / CIP 109462 / JCM 13490 / 255-15), this protein is Phosphoglucosamine mutase.